Here is a 664-residue protein sequence, read N- to C-terminus: E3 ubiquitin-protein ligase CHFR (664 aa).

The 52-residue stretch at 38 to 89 (WTIGRRRGCDLSFPSNKLVSGDHCKLTVDEISGEVTLEDTSTNGTVINKLQV) folds into the FHA domain. Disordered regions lie at residues 170–220 (LEEP…GRSS) and 245–264 (ESKD…GDGE). Polar residues predominate over residues 174–202 (QPSTSTSDLLPTASTSSTEPELTSAGQKH). Residues 203–215 (SSSSGPGNTSISP) show a composition bias toward low complexity. Residues 245–263 (ESKDHEELEPAKKKMKGDG) show a composition bias toward basic and acidic residues. The segment at 303 to 342 (CIICQDLLHDCVSLQPCMHTFCAACYSGWMERSSLCPTCR) adopts an RING-type zinc-finger fold. The residue at position 385 (Thr-385) is a Phosphothreonine. The segment at 389 to 413 (LQPKVRRSFSDEEGSSEDLLELSDV) is disordered. Residues 399–413 (DEEGSSEDLLELSDV) show a composition bias toward acidic residues. The PBZ-type zinc finger occupies 633–655 (PDCYWGRNCRTQVKAHHAMKFNH).

Belongs to the CHFR family. As to quaternary structure, interacts with HDAC1 and HDAC2. Interacts with PML (with sumoylated form of PML). In terms of processing, poly-ADP-ribosylated. In addition to binding non covalently poly(ADP-ribose) via its PBZ-type zinc finger, the protein is also covalently poly-ADP-ribosylated by PARP1. Autoubiquitinated; may regulate its cellular level. Post-translationally, phosphorylated by PKB. Phosphorylation may affect its E3 ligase activity.

Its subcellular location is the nucleus. It is found in the PML body. The enzyme catalyses S-ubiquitinyl-[E2 ubiquitin-conjugating enzyme]-L-cysteine + [acceptor protein]-L-lysine = [E2 ubiquitin-conjugating enzyme]-L-cysteine + N(6)-ubiquitinyl-[acceptor protein]-L-lysine.. It functions in the pathway protein modification; protein ubiquitination. In terms of biological role, E3 ubiquitin-protein ligase that functions in the antephase checkpoint by actively delaying passage into mitosis in response to microtubule poisons. Acts in early prophase before chromosome condensation, when the centrosome move apart from each other along the periphery of the nucleus. Probably involved in signaling the presence of mitotic stress caused by microtubule poisons by mediating the 'Lys-48'-linked ubiquitination of target proteins, leading to their degradation by the proteasome. Promotes the ubiquitination and subsequent degradation of AURKA and PLK1. Probably acts as a tumor suppressor, possibly by mediating the polyubiquitination of HDAC1, leading to its degradation. May also promote the formation of 'Lys-63'-linked polyubiquitin chains and functions with the specific ubiquitin-conjugating UBC13-MMS2 (UBE2N-UBE2V2) heterodimer. Substrates that are polyubiquitinated at 'Lys-63' are usually not targeted for degradation, but are rather involved in signaling cellular stress. This chain is E3 ubiquitin-protein ligase CHFR (Chfr), found in Mus musculus (Mouse).